The following is a 200-amino-acid chain: Nascent polypeptide-associated complex subunit alpha (200 aa).

The span at 1 to 19 (MADPRVEELPEEEVKKTQV) shows a compositional bias: basic and acidic residues. Disordered regions lie at residues 1 to 54 (MADP…NEKK) and 118 to 165 (AAQQ…EDKD). The span at 20–34 (EDLDNSSDDESDIEA) shows a compositional bias: acidic residues. The NAC-A/B domain maps to 49–114 (SRNEKKARKA…AKIEDLNASA (66 aa)). Residues 127–146 (AEHDHAGHTHEHEEAGKAKE) are compositionally biased toward basic and acidic residues. A compositionally biased stretch (acidic residues) spans 147–160 (EEEEDEGEEVDAEG). Residues 161-200 (IEDKDIELVMTQANVSRKKAIKALKENDNDIVNSIMALSI) form the UBA domain.

This sequence belongs to the NAC-alpha family. As to quaternary structure, part of the nascent polypeptide-associated complex (NAC), consisting of npc-1/egd2 and npc-2/egd1. NAC associates with ribosomes via npc-2/egd1.

It is found in the cytoplasm. The protein localises to the nucleus. Component of the nascent polypeptide-associated complex (NAC), a dynamic component of the ribosomal exit tunnel, protecting the emerging polypeptides from interaction with other cytoplasmic proteins to ensure appropriate nascent protein targeting. The NAC complex also promotes mitochondrial protein import by enhancing productive ribosome interactions with the outer mitochondrial membrane and blocks the inappropriate interaction of ribosomes translating non-secretory nascent polypeptides with translocation sites in the membrane of the endoplasmic reticulum. Npc-1/egd2 may also be involved in transcription regulation. This is Nascent polypeptide-associated complex subunit alpha (npc-1) from Neurospora crassa (strain ATCC 24698 / 74-OR23-1A / CBS 708.71 / DSM 1257 / FGSC 987).